Reading from the N-terminus, the 490-residue chain is 5'-3' exonuclease PLD3 (490 aa).

Residues 1-38 (MKPKLMYQELKVPAEEPANELPMNEIEAWKAAEKKARW) are Cytoplasmic-facing. A helical; Signal-anchor for type II membrane protein membrane pass occupies residues 39-59 (VLLVLILAVVGFGALMTQLFL). Topologically, residues 60 to 490 (WEYGDLHLFG…DSVGNACRLL (431 aa)) are lumenal. Intrachain disulfides connect C77/C239 and C81/C237. N-linked (GlcNAc...) asparagine glycosylation is found at N97 and N132. The PLD phosphodiesterase 1 domain occupies 196–223 (THGVLHTKFWVVDQTHFYLGSANMDWRS). Active-site residues include H201, K203, and D208. H201 serves as the catalytic Proton donor. Phosphate is bound by residues H201 and K203. Residue N218 coordinates phosphate. N236, N284, and N387 each carry an N-linked (GlcNAc...) asparagine glycan. The cysteines at positions 366 and 487 are disulfide-linked. The 27-residue stretch at 411-437 (YARVNHNKYMVTERATYIGTSNWSGNY) folds into the PLD phosphodiesterase 2 domain. H416 contacts phosphate. The active-site Nucleophile is H416. Mg(2+) is bound at residue F438.

It belongs to the phospholipase D family. As to quaternary structure, homodimer. Interacts with APP. Post-translationally, N-glycosylated. Proteolytically processed to a soluble form that is stable within endosomes and lysosomes. During transport through the secretory pathway becomes proteolysed by cysteine proteases, thereby releasing a stable soluble lysosomal lumenal polypeptide, whereas the transmembrane-bound fragment is rapidly degraded. Its transport route to lysosomes involves ubiquitination and the ESCRT complex. In terms of processing, ubiquitinated. Ubiquitination mediates sorting into lysosomes.

It is found in the endoplasmic reticulum membrane. It localises to the lysosome lumen. The protein localises to the early endosome membrane. The protein resides in the late endosome membrane. Its subcellular location is the golgi apparatus membrane. It is found in the endosome membrane. It catalyses the reaction Exonucleolytic cleavage in the 5'- to 3'-direction to yield nucleoside 3'-phosphates.. It carries out the reaction a 5'-end 5'-dephospho-ribonucleotidyl-ribonucleotide-RNA + H2O = a ribonucleoside 3'-phosphate + a 5'-end dephospho-ribonucleoside-RNA + H(+). The catalysed reaction is a ribonucleoside 3'-phosphate-2'-3'-cyclophospho-GMP + H2O = a ribonucleoside 3'-phosphate + 2',3'-cyclophospho-GMP + H(+). The enzyme catalyses a 5'-end 5'-dephospho-2'-deoxyribonucleotidyl-2'-deoxyribonucleotide in single-stranded DNA + H2O = a 5'-end dephospho-2'-deoxyribonucleoside in single-stranded DNA + a 2'-deoxyribonucleoside 3'-phosphate + H(+). It catalyses the reaction a 5'-end 5'-phospho-2'-deoxyribonucleotide in single-stranded DNA + H2O = a 5'-end 5'-dephospho-2'-deoxyribonucleotide in single-stranded DNA + phosphate. It carries out the reaction a 3-lyso-sn-glycero-1-phospho-(3'-acyl-1'-sn-glycerol) + a 1-acyl-sn-glycerol = a 3-acyl-sn-glycero-1-phospho-(3'-acyl-1'-sn-glycerol) + glycerol. The catalysed reaction is 3-lyso-sn-glycero-1-phospho-(3'-(9Z-octadecenoyl)-1'-sn-glycerol) + 1-(9Z-octadecenoyl)-sn-glycerol = 3-(9Z-octadecenoyl)-sn-glycero-1-phospho-(3'-(9Z-octadecenoyl)-1'-sn-glycerol) + glycerol. In terms of biological role, 5'-&gt;3' exonuclease that hydrolyzes the phosphodiester bond of single-stranded DNA (ssDNA) and RNA molecules to form nucleoside 3'-monophosphates and 5'-end 5'-hydroxy deoxyribonucleotide/ribonucleotide fragments. Partially redundant with PLD4, can cleave all four nucleotides displaying higher efficiency for ssDNA and RNA fragments initiated with uridine and guanosine residues and lower efficiency for cytidine-initiated substrates. As a result, it does not always degrade polynucleotides to the single nucleotide level, it can stall at specific sites sparing certain fragments from exonucleolytic degradation. Processes self and pathogenic ssDNA and RNA molecules that reach the endolysosomal compartment via phagocytosis or autophagy and may serve as 'danger' signals for recognition by innate immune receptors such as toll-like receptors (TLRs). Degrades mitochondrial CpG-rich ssDNA fragments to prevent TLR9 activation and autoinflammatory response, but it can cleave viral RNA to generate ligands for TLR7 activation and initiate antiviral immune responses. In plasmacytoid dendritic cells, it cooperates with endonuclease RNASET2 to release 2',3'-cyclic guanosine monophosphate (2',3'-cGMP), a potent stimulatory ligand for TLR7. Produces 2',3'-cGMPs and cytidine-rich RNA fragments that occupy TLR7 ligand-binding pockets and trigger a signaling-competent state. Can exert polynucleotide phosphatase activity toward 5'-phosphorylated ssDNA substrates although at a slow rate. Transphosphatidylase that catalyzes the exchange with R to S stereo-inversion of the glycerol moiety between (S,R)-lysophosphatidylglycerol (LPG) and monoacylglycerol (MAG) substrates to yield (S,S)-bis(monoacylglycero)phosphate (BMP). Can synthesize a variety of (S,S)-BMPs representing the main phospholipid constituent of lysosomal intralumenal vesicle (ILV) membranes that bind acid hydrolases for lipid degradation. Regulates the homeostasis and interorganellar communication of the endolysosomal system with an overall impact on cellular removal of dysfunctional organelles via autophagy as well as proper protein and lipid turnover. May play a role in myotube formation in response to ER stress. The sequence is that of 5'-3' exonuclease PLD3 (PLD3) from Macaca fascicularis (Crab-eating macaque).